Reading from the N-terminus, the 332-residue chain is Beta-ketoacyl-[acyl-carrier-protein] synthase III 5 (332 aa).

Catalysis depends on residues Cys-111 and His-253. An ACP-binding region spans residues 254–258; that stretch reads QANAR. The active site involves Asn-283.

The protein belongs to the thiolase-like superfamily. FabH family. As to quaternary structure, homodimer.

Its subcellular location is the cytoplasm. The enzyme catalyses malonyl-[ACP] + acetyl-CoA + H(+) = 3-oxobutanoyl-[ACP] + CO2 + CoA. The protein operates within lipid metabolism; fatty acid biosynthesis. Catalyzes the condensation reaction of fatty acid synthesis by the addition to an acyl acceptor of two carbons from malonyl-ACP. Catalyzes the first condensation reaction which initiates fatty acid synthesis and may therefore play a role in governing the total rate of fatty acid production. Possesses both acetoacetyl-ACP synthase and acetyl transacylase activities. Its substrate specificity determines the biosynthesis of branched-chain and/or straight-chain of fatty acids. This Streptomyces coelicolor (strain ATCC BAA-471 / A3(2) / M145) protein is Beta-ketoacyl-[acyl-carrier-protein] synthase III 5.